A 172-amino-acid polypeptide reads, in one-letter code: RNA silencing suppressor p19 (172 aa).

A disordered region spans residues 153–172; the sequence is EGNVSRGSPEGTEAFKEESE.

This sequence belongs to the tombusvirus protein p19 family. In terms of assembly, homodimer.

Viral suppressor of RNA silencing which binds specifically to silencing RNAs (siRNAs). Acts as a molecular caliper to specifically select siRNAs based on the length of the duplex region of the RNA. The chain is RNA silencing suppressor p19 from Pear latent virus (PeLV).